The sequence spans 76 residues: Kappa-actitoxin-Avd4c (76 aa).

The first 19 residues, 1 to 19 (MNKALFLCLVVLCAAVVFA), serve as a signal peptide directing secretion. A propeptide spanning residues 20–31 (AEDLQKAKHAPF) is cleaved from the precursor. Disulfide bonds link Cys-37/Cys-72, Cys-39/Cys-65, and Cys-55/Cys-73.

It belongs to the sea anemone type 3 (BDS) potassium channel toxin family. As to expression, moderately expressed in the ectodermal tissue from the distal and proximal tentacles, body wall, and oral disk.

It is found in the secreted. It localises to the nematocyst. In terms of biological role, blocks Kv3 voltage-gated potassium channels. Reduces blood pressure. This chain is Kappa-actitoxin-Avd4c, found in Anemonia viridis (Snakelocks anemone).